The following is a 557-amino-acid chain: TBCC domain-containing protein 1 (557 aa).

A C-CAP/cofactor C-like domain is found at 290–435 (TTKRAKIACN…LEDHMARTGL (146 aa)).

Belongs to the TBCC family.

The protein localises to the cytoplasm. Its subcellular location is the cytoskeleton. It is found in the microtubule organizing center. The protein resides in the centrosome. It localises to the spindle pole. Its function is as follows. Plays a role in the regulation of centrosome and Golgi apparatus positioning, with consequences on cell shape and cell migration. The protein is TBCC domain-containing protein 1 (TBCCD1) of Homo sapiens (Human).